We begin with the raw amino-acid sequence, 87 residues long: MRSATFFLVSCVLMSFVLSHVKEVEAGLDPMAANLRVRKDIFIGGCGRDGNKTCMKDFVKKGGVMNKPISCECDNLGYEHLCRCNFS.

Residues 1 to 26 (MRSATFFLVSCVLMSFVLSHVKEVEA) form the signal peptide. Cystine bridges form between cysteine 46–cysteine 73, cysteine 54–cysteine 82, and cysteine 71–cysteine 84.

This sequence belongs to the DEFL family.

It localises to the secreted. The chain is Putative defensin-like protein 235 (SCRL26) from Arabidopsis thaliana (Mouse-ear cress).